Consider the following 381-residue polypeptide: Cytochrome b (381 aa).

Helical transmembrane passes span 33 to 53, 77 to 98, 113 to 133, and 178 to 198; these read FGSLLGICLIIQILTGLFLAM, WLLRNLHANGASMFFMCLFLHV, WNIGVILLLTVMATAFVGYVL, and FFAFHFILPFIITALAVVHLL. The heme b site is built by histidine 83 and histidine 97. Heme b-binding residues include histidine 182 and histidine 196. Histidine 201 is an a ubiquinone binding site. 4 helical membrane passes run 226–246, 288–308, 320–340, and 347–367; these read IKDALGLMLLLLMLLLLALFS, LGGVLALLASILILLIIPLLH, ISQTLFWILTANLITLTWIGG, and FIIIGQLAPMLYFLLILVLMP.

The protein belongs to the cytochrome b family. In terms of assembly, the cytochrome bc1 complex contains 11 subunits: 3 respiratory subunits (MT-CYB, CYC1 and UQCRFS1), 2 core proteins (UQCRC1 and UQCRC2) and 6 low-molecular weight proteins (UQCRH/QCR6, UQCRB/QCR7, UQCRQ/QCR8, UQCR10/QCR9, UQCR11/QCR10 and a cleavage product of UQCRFS1). This cytochrome bc1 complex then forms a dimer. Heme b is required as a cofactor.

It localises to the mitochondrion inner membrane. Component of the ubiquinol-cytochrome c reductase complex (complex III or cytochrome b-c1 complex) that is part of the mitochondrial respiratory chain. The b-c1 complex mediates electron transfer from ubiquinol to cytochrome c. Contributes to the generation of a proton gradient across the mitochondrial membrane that is then used for ATP synthesis. The protein is Cytochrome b (MT-CYB) of Pseudantechinus bilarni (Sandstone dibbler).